Consider the following 520-residue polypeptide: 2-isopropylmalate synthase (520 aa).

A Pyruvate carboxyltransferase domain is found at 12–274 (VLIFDTTLRD…TTGIDTTQIM (263 aa)). The Mn(2+) site is built by Asp-21, His-209, His-211, and Asn-245. Residues 398–520 (RLLSLTVIAG…RLHAQHAAAE (123 aa)) are regulatory domain.

This sequence belongs to the alpha-IPM synthase/homocitrate synthase family. LeuA type 1 subfamily. As to quaternary structure, homodimer. Mn(2+) serves as cofactor.

The protein resides in the cytoplasm. The enzyme catalyses 3-methyl-2-oxobutanoate + acetyl-CoA + H2O = (2S)-2-isopropylmalate + CoA + H(+). It functions in the pathway amino-acid biosynthesis; L-leucine biosynthesis; L-leucine from 3-methyl-2-oxobutanoate: step 1/4. Its function is as follows. Catalyzes the condensation of the acetyl group of acetyl-CoA with 3-methyl-2-oxobutanoate (2-ketoisovalerate) to form 3-carboxy-3-hydroxy-4-methylpentanoate (2-isopropylmalate). The polypeptide is 2-isopropylmalate synthase (Methylobacterium nodulans (strain LMG 21967 / CNCM I-2342 / ORS 2060)).